The chain runs to 574 residues: Septation ring formation regulator EzrA (574 aa).

At 1–7 (MSSGIVL) the chain is on the extracellular side. Residues 8–26 (LIVAIVLVVIIAYLIAIII) form a helical membrane-spanning segment. Residues 27–574 (RKRNDSLITK…YEKTRETIRF (548 aa)) are Cytoplasmic-facing. Coiled coils occupy residues 102 to 141 (NFIRAHSQINNIESQLNLAEEDIKAIREALAVLKEQEEKN), 255 to 368 (KNIE…KDVL), and 409 to 495 (LKNI…EETA).

Belongs to the EzrA family.

The protein localises to the cell membrane. Functionally, negative regulator of FtsZ ring formation; modulates the frequency and position of FtsZ ring formation. Inhibits FtsZ ring formation at polar sites. Interacts either with FtsZ or with one of its binding partners to promote depolymerization. This Streptococcus mutans serotype c (strain ATCC 700610 / UA159) protein is Septation ring formation regulator EzrA.